The primary structure comprises 258 residues: SLA class II histocompatibility antigen, DQ haplotype D beta chain (258 aa).

Residues 1–31 form the signal peptide; it reads MVALRLPRGLWTAALTVMLVVLGAPVAEGRD. A beta-1 region spans residues 32-123; that stretch reads SPQDFVVQFK…IEEGTTLQRR (92 aa). At 32–227 the chain is on the extracellular side; sequence SPQDFVVQFK…RAQSESAQSK (196 aa). 2 disulfides stabilise this stretch: cysteine 44–cysteine 108 and cysteine 146–cysteine 202. Asparagine 48 is a glycosylation site (N-linked (GlcNAc...) asparagine). A beta-2 region spans residues 124–217; the sequence is VQPTVTISPS…SLQSPILVEW (94 aa). Residues 126-230 enclose the Ig-like C1-type domain; the sequence is PTVTISPSKA…SESAQSKMLS (105 aa). The interval 218–227 is connecting peptide; it reads RAQSESAQSK. A helical membrane pass occupies residues 228–248; that stretch reads MLSGVGGFVLGLIFLGLGLFI. At 249–258 the chain is on the cytoplasmic side; it reads RHRSQKGLVR.

It belongs to the MHC class II family.

It localises to the membrane. In Sus scrofa (Pig), this protein is SLA class II histocompatibility antigen, DQ haplotype D beta chain.